Consider the following 177-residue polypeptide: ATP synthase subunit delta (177 aa).

Belongs to the ATPase delta chain family. As to quaternary structure, F-type ATPases have 2 components, F(1) - the catalytic core - and F(0) - the membrane proton channel. F(1) has five subunits: alpha(3), beta(3), gamma(1), delta(1), epsilon(1). F(0) has three main subunits: a(1), b(2) and c(10-14). The alpha and beta chains form an alternating ring which encloses part of the gamma chain. F(1) is attached to F(0) by a central stalk formed by the gamma and epsilon chains, while a peripheral stalk is formed by the delta and b chains.

The protein localises to the cell inner membrane. In terms of biological role, f(1)F(0) ATP synthase produces ATP from ADP in the presence of a proton or sodium gradient. F-type ATPases consist of two structural domains, F(1) containing the extramembraneous catalytic core and F(0) containing the membrane proton channel, linked together by a central stalk and a peripheral stalk. During catalysis, ATP synthesis in the catalytic domain of F(1) is coupled via a rotary mechanism of the central stalk subunits to proton translocation. This protein is part of the stalk that links CF(0) to CF(1). It either transmits conformational changes from CF(0) to CF(1) or is implicated in proton conduction. This Shewanella sp. (strain ANA-3) protein is ATP synthase subunit delta.